Here is a 153-residue protein sequence, read N- to C-terminus: Ribosome maturation factor RimP (153 aa).

It belongs to the RimP family.

The protein localises to the cytoplasm. Functionally, required for maturation of 30S ribosomal subunits. This chain is Ribosome maturation factor RimP, found in Clostridium botulinum (strain Okra / Type B1).